Reading from the N-terminus, the 614-residue chain is DBH-like monooxygenase protein 1 (614 aa).

Positions 1-22 (MRPLRPWALLLGALLGAAAAAA) are cleaved as a signal peptide. Topologically, residues 23–592 (RRYPHVAVLD…SSSCLPCSLS (570 aa)) are lumenal. A DOMON domain is found at 35–148 (AAYRLLWGRR…STVRVIWAYH (114 aa)). N-linked (GlcNAc...) asparagine glycosylation occurs at Asn114. Tyr203 is a catalytic residue. Disulfide bonds link Cys205-Cys257 and Cys242-Cys269. Residues His235 and His236 each contribute to the Cu cation site. An N-linked (GlcNAc...) asparagine glycan is attached at Asn247. His307, His389, His391, and Met464 together coordinate Cu cation. 3 disulfide bridges follow: Cys364–Cys480, Cys368–Cys550, and Cys443–Cys465. Residue His389 is part of the active site. N-linked (GlcNAc...) asparagine glycosylation is found at Asn476 and Asn517. Residues 593–613 (LTLLFVVYVASSTIGNFGPVV) traverse the membrane as a helical segment.

This sequence belongs to the copper type II ascorbate-dependent monooxygenase family. Cu(2+) serves as cofactor.

The protein resides in the endoplasmic reticulum membrane. This chain is DBH-like monooxygenase protein 1 (MOXD1), found in Gallus gallus (Chicken).